The chain runs to 363 residues: Probable aminomethyltransferase (363 aa).

The protein belongs to the GcvT family. As to quaternary structure, the glycine cleavage system is composed of four proteins: P, T, L and H.

It catalyses the reaction N(6)-[(R)-S(8)-aminomethyldihydrolipoyl]-L-lysyl-[protein] + (6S)-5,6,7,8-tetrahydrofolate = N(6)-[(R)-dihydrolipoyl]-L-lysyl-[protein] + (6R)-5,10-methylene-5,6,7,8-tetrahydrofolate + NH4(+). Its function is as follows. The glycine cleavage system catalyzes the degradation of glycine. The chain is Probable aminomethyltransferase from Haloarcula marismortui (strain ATCC 43049 / DSM 3752 / JCM 8966 / VKM B-1809) (Halobacterium marismortui).